The following is a 1706-amino-acid chain: PR domain zinc finger protein 2 (1706 aa).

Residues 27 to 140 (EEVRLFPSAV…PGEELLVWYN (114 aa)) enclose the SET domain. The segment at 154-342 (ERASARSKRS…TPPPHTPRAR (189 aa)) is disordered. Residues 158 to 183 (ARSKRSSPKSRRGKKKSHENKNKGIR) are compositionally biased toward basic residues. The segment covering 185–199 (HPTQLKASELDSTFA) has biased composition (polar residues). Over residues 258–294 (TDCEVNDVEEEELEEEEELEEEEEEELGEDGVEEADM) the composition is skewed to acidic residues. The span at 299 to 313 (SAKEPEIRCEEKPED) shows a compositional bias: basic and acidic residues. 2 consecutive C2H2-type zinc fingers follow at residues 355-377 (FPCQ…MHIH) and 385-407 (FKCK…ERRH). 3 disordered regions span residues 400–446 (RRRH…QLGQ), 492–542 (RRHQ…EEEG), and 618–655 (LLKD…STAP). Ser-416 is modified (phosphoserine). Residues 427–439 (DGKGENVTSKDES) are compositionally biased toward basic and acidic residues. The C2H2-type 3 zinc-finger motif lies at 476–499 (HPCKYCKKVFGTHTNMRRHQRRVH). Ser-637 carries the phosphoserine modification. Glycyl lysine isopeptide (Lys-Gly) (interchain with G-Cter in SUMO2) cross-links involve residues Lys-645, Lys-684, and Lys-686. 3 disordered regions span residues 724-794 (TSSR…SPPC), 823-1075 (SGVK…SSVV), and 1088-1112 (VTFK…AGGQ). Residues 733-743 (SSPPSSPQHSP) show a composition bias toward low complexity. Position 738 is a phosphoserine (Ser-738). Lys-769 participates in a covalent cross-link: Glycyl lysine isopeptide (Lys-Gly) (interchain with G-Cter in SUMO2). Phosphoserine occurs at positions 776, 780, and 791. The span at 823–832 (SGVKQKSEGT) shows a compositional bias: polar residues. Basic and acidic residues predominate over residues 846 to 863 (SVHKKPCDSEGKEFKENH). Residues Lys-860 and Lys-870 each participate in a glycyl lysine isopeptide (Lys-Gly) (interchain with G-Cter in SUMO2) cross-link. 2 stretches are compositionally biased toward polar residues: residues 891–912 (SLPT…SPDT) and 943–952 (LQTASLSSGQ). A compositionally biased stretch (pro residues) spans 962 to 983 (PSSPPPCPPVLTVATPPPPLLP). Residues 993–1009 (DASPQQCPSPFSNTTAQ) show a composition bias toward polar residues. A compositionally biased stretch (low complexity) spans 1010–1019 (SPLPILSPTV). The span at 1020 to 1030 (SPSPSPIPPVE) shows a compositional bias: pro residues. Residues 1034–1062 (SAASPGPPTLSSSSSSSSSFPSSSCSSTS) are compositionally biased toward low complexity. The segment covering 1091-1106 (KQEESESEGLKPKEEA) has biased composition (basic and acidic residues). 3 C2H2-type zinc fingers span residues 1123 to 1145 (FICN…LSVH), 1151 to 1174 (FKCE…FLLH), and 1180 to 1203 (FVCS…RDLH). Residues Lys-1136 and Lys-1140 each participate in a glycyl lysine isopeptide (Lys-Gly) (interchain with G-Cter in SUMO2) cross-link. The segment covering 1218–1227 (LRPQNFTDPS) has biased composition (polar residues). Residues 1218 to 1251 (LRPQNFTDPSKANVEHMPSLPEEPLETSREEELN) form a disordered region. Lys-1269 participates in a covalent cross-link: Glycyl lysine isopeptide (Lys-Gly) (interchain with G-Cter in SUMO2). Residues 1321-1343 (IRCTKCGKGVDNMPELHKHILAC) form a C2H2-type 7; atypical zinc finger. The C2H2-type 8; atypical zinc-finger motif lies at 1443–1465 (HICPYCDREFTYIGSLNKHAAFS). A disordered region spans residues 1466–1563 (CPKKPLSPSK…KKASSSSLRN (98 aa)). Over residues 1474–1486 (SKRKVSHSSKKGG) the composition is skewed to basic residues. Positions 1487–1498 (HASSSSSDRNSS) are enriched in low complexity. Residues 1528–1544 (GPAQASLPSSSFRSRQN) are compositionally biased toward polar residues. The span at 1548–1563 (AASVKSKKASSSSLRN) shows a compositional bias: low complexity.

Belongs to the class V-like SAM-binding methyltransferase superfamily. In terms of assembly, binds to the retinoblastoma protein (RB). Interacts with GATA3.

It localises to the nucleus. The enzyme catalyses L-lysyl-[histone] + S-adenosyl-L-methionine = N(6)-methyl-L-lysyl-[histone] + S-adenosyl-L-homocysteine + H(+). It catalyses the reaction L-lysyl(9)-[histone H3] + 3 S-adenosyl-L-methionine = N(6),N(6),N(6)-trimethyl-L-lysyl(9)-[histone H3] + 3 S-adenosyl-L-homocysteine + 3 H(+). Functionally, S-adenosyl-L-methionine-dependent histone methyltransferase that specifically methylates 'Lys-9' of histone H3. May function as a DNA-binding transcription factor. Binds to the macrophage-specific TPA-responsive element (MTE) of the HMOX1 (heme oxygenase 1) gene and may act as a transcriptional activator of this gene. This chain is PR domain zinc finger protein 2 (Prdm2), found in Rattus norvegicus (Rat).